Consider the following 400-residue polypeptide: Golgin-45 (400 aa).

Positions 1-16 (MTTKNLETKVTVTSSP) are enriched in polar residues. A disordered region spans residues 1–58 (MTTKNLETKVTVTSSPIRGAGDGMETEEPPKSVEVTSGVQSRKHHSLQSPWKKAVPSE). Serine 15 bears the Phosphoserine mark. The short motif at 18–22 (RGAGD) is the Tankyrase-binding motif element. A Phosphoserine modification is found at serine 49. A coiled-coil region spans residues 120 to 213 (NKELSEVKNV…QLERMSIQCD (94 aa)). Threonine 348 is subject to Phosphothreonine. Residue serine 353 is modified to Phosphoserine. Residues 394–400 (RGELIAL) are essential for interaction with GORASP2.

As to quaternary structure, interacts with GORASP2. Interacts with the GTP-bound form of RAB2, but not with other Golgi Rab proteins. Identified in a complex with RAB2 and GORASP2. In terms of processing, ADP-ribosylated by tankyrase TNKS and TNKS2. Poly-ADP-ribosylated protein is recognized by RNF146, followed by ubiquitination. Ubiquitinated by RNF146 when poly-ADP-ribosylated, leading to its degradation. In terms of tissue distribution, detected in adrenal gland.

The protein resides in the golgi apparatus membrane. Its subcellular location is the nucleus. It localises to the cytoplasm. Functionally, required for normal Golgi structure and for protein transport from the endoplasmic reticulum (ER) through the Golgi apparatus to the cell surface. This is Golgin-45 (BLZF1) from Homo sapiens (Human).